Reading from the N-terminus, the 417-residue chain is MAEIKNYTLNFGPQHPAAHGVLRLVLELDGEVIQRADPHIGLLHRATEKLAESKTFIQSVPYMDRLDYVSMMVNEHGYVLAIEKLLGIDVPIRAKYIRVLFDEVTRVLNHLMWIGAHALDVGAMAVFLYAFREREDLMDVYEAVSGARMHAAYYRPGGVYRDLPDAMPQYKASKIRNTKALSKLNENRQGSLLDFIEDFFNRFPKCVDEYETLLTDNRIWKQRLVGIGVVSPERALQMGLTGAMLRGSGIEWDLRKKQPYEVYDQMDFDIPVGVNGDCYDRYLVRVEEMRQSTRIAKQCIEWLRKNPGPVMTDNHKVAPPSRVGMKSNMEELIHHFKLFTEGFHVPEGEAYAAVEHPKGEFGIYLVSDGANKPYRLKIRAPGYAHLSALDEMARGHMIADAVTIIGTQDIVFGEVDR.

Belongs to the complex I 49 kDa subunit family. NDH-1 is composed of 14 different subunits. Subunits NuoB, C, D, E, F, and G constitute the peripheral sector of the complex.

The protein localises to the cell inner membrane. The enzyme catalyses a quinone + NADH + 5 H(+)(in) = a quinol + NAD(+) + 4 H(+)(out). NDH-1 shuttles electrons from NADH, via FMN and iron-sulfur (Fe-S) centers, to quinones in the respiratory chain. The immediate electron acceptor for the enzyme in this species is believed to be ubiquinone. Couples the redox reaction to proton translocation (for every two electrons transferred, four hydrogen ions are translocated across the cytoplasmic membrane), and thus conserves the redox energy in a proton gradient. The chain is NADH-quinone oxidoreductase subunit D from Paraburkholderia phymatum (strain DSM 17167 / CIP 108236 / LMG 21445 / STM815) (Burkholderia phymatum).